A 463-amino-acid polypeptide reads, in one-letter code: Phosphomethylpyrimidine synthase (463 aa).

Substrate-binding positions include Asn-80, Met-109, Tyr-138, His-173, 193-195 (SRG), 234-237 (DGLR), and Glu-273. His-277 contributes to the Zn(2+) binding site. Tyr-300 contacts substrate. Zn(2+) is bound at residue His-341. [4Fe-4S] cluster contacts are provided by Cys-421, Cys-424, and Cys-429.

The protein belongs to the ThiC family. As to quaternary structure, homodimer. [4Fe-4S] cluster serves as cofactor.

It catalyses the reaction 5-amino-1-(5-phospho-beta-D-ribosyl)imidazole + S-adenosyl-L-methionine = 4-amino-2-methyl-5-(phosphooxymethyl)pyrimidine + CO + 5'-deoxyadenosine + formate + L-methionine + 3 H(+). It functions in the pathway cofactor biosynthesis; thiamine diphosphate biosynthesis. Its function is as follows. Catalyzes the synthesis of the hydroxymethylpyrimidine phosphate (HMP-P) moiety of thiamine from aminoimidazole ribotide (AIR) in a radical S-adenosyl-L-methionine (SAM)-dependent reaction. The sequence is that of Phosphomethylpyrimidine synthase from Anaeromyxobacter dehalogenans (strain 2CP-1 / ATCC BAA-258).